The chain runs to 136 residues: Nucleoside diphosphate kinase (136 aa).

Residues Lys-10, Phe-58, Arg-86, Thr-92, Arg-104, and Asn-114 each contribute to the ATP site. His-117 acts as the Pros-phosphohistidine intermediate in catalysis.

It belongs to the NDK family. In terms of assembly, homotetramer. Mg(2+) is required as a cofactor.

The protein localises to the cytoplasm. The catalysed reaction is a 2'-deoxyribonucleoside 5'-diphosphate + ATP = a 2'-deoxyribonucleoside 5'-triphosphate + ADP. It catalyses the reaction a ribonucleoside 5'-diphosphate + ATP = a ribonucleoside 5'-triphosphate + ADP. Its function is as follows. Major role in the synthesis of nucleoside triphosphates other than ATP. The ATP gamma phosphate is transferred to the NDP beta phosphate via a ping-pong mechanism, using a phosphorylated active-site intermediate. This chain is Nucleoside diphosphate kinase, found in Mycobacterium leprae (strain TN).